Reading from the N-terminus, the 968-residue chain is A disintegrin and metalloproteinase with thrombospondin motifs 1 (968 aa).

2 disordered regions span residues 1-23 (MQPK…DVQR) and 177-253 (APAV…RKKR). An N-terminal signal peptide occupies residues 1–48 (MQPKVPLGSRKQKPCSDMGDVQRAARSRGSLSAHMLLLLLASITMLLC). Positions 49–253 (ARGAHGRPTE…SGPGSIRKKR (205 aa)) are excised as a propeptide. Residues 204 to 211 (AKCGVMDD) carry the Cysteine switch motif. Residue Cys-206 participates in Zn(2+) binding. Positions 214 to 229 (LPTSDSRPESQNTRNQ) are enriched in polar residues. The Peptidase M12B domain occupies 259–468 (RYVETMLVAD…GHGECLMDKP (210 aa)). Ca(2+) is bound by residues Glu-262, Asp-345, and Asp-352. 4 cysteine pairs are disulfide-bonded: Cys-334/Cys-386, Cys-363/Cys-368, Cys-380/Cys-463, and Cys-418/Cys-447. A Zn(2+)-binding site is contributed by His-402. The active site involves Glu-403. The Zn(2+) site is built by His-406 and His-412. Ca(2+)-binding residues include Cys-463 and Asp-466. A Disintegrin domain is found at 477 to 559 (DLPGTLYDAN…TDMKHFATPV (83 aa)). Disulfide bonds link Cys-489–Cys-512, Cys-500–Cys-522, Cys-507–Cys-541, and Cys-535–Cys-546. Asn-548 carries an N-linked (GlcNAc...) asparagine glycan. In terms of domain architecture, TSP type-1 1 spans 560 to 615 (HGSWGPWGPWGDCSRTCGGGVQYTMRECDNPVPKNGGKYCEGKRVRYRSCNIEDCP). 3 cysteine pairs are disulfide-bonded: Cys-572/Cys-609, Cys-576/Cys-614, and Cys-587/Cys-599. Asn-721, Asn-765, and Asn-783 each carry an N-linked (GlcNAc...) asparagine glycan. The segment at 726-850 (KKMSGIVTST…YFMKKKTESF (125 aa)) is spacer. 2 consecutive TSP type-1 domains span residues 855-911 (TFSE…LPCP) and 912-968 (HWQV…TQCS). Asn-946 is a glycosylation site (N-linked (GlcNAc...) asparagine).

It depends on Zn(2+) as a cofactor. In terms of processing, the precursor is cleaved by a furin endopeptidase. Glycosylated. Can be O-fucosylated by POFUT2 on a serine or a threonine residue found within the consensus sequence C1-X(2)-(S/T)-C2-G of the TSP type-1 repeat domains where C1 and C2 are the first and second cysteine residue of the repeat, respectively. Fucosylated repeats can then be further glycosylated by the addition of a beta-1,3-glucose residue by the glucosyltransferase, B3GALTL. Fucosylation mediates the efficient secretion of ADAMTS family members. Can also be C-glycosylated with one or two mannose molecules on tryptophan residues within the consensus sequence W-X-X-W of the TPRs, and N-glycosylated. These other glycosylations can also facilitate secretion.

The protein localises to the secreted. The protein resides in the extracellular space. It localises to the extracellular matrix. Functionally, metalloprotease which cleaves aggrecan, a cartilage proteoglycan, at the '1691-Glu-|-Leu-1692' site (within the chondroitin sulfate attachment domain), and may be involved in its turnover. Also cleaves COMP. Has angiogenic inhibitor activity. May play a critical role in follicular rupture. This chain is A disintegrin and metalloproteinase with thrombospondin motifs 1 (Adamts1), found in Mus musculus (Mouse).